The chain runs to 1809 residues: MDWGWGSRCCRPGRRDLLCVLALLAGCLLPVCRTRVYTNHWAVKIAGGFAEADRIASKYGFINVGQIGALKDYYHFYHSRTIKRSVLSSRGTHSFISMEPKVEWIQQQVVKKRTKRDYDLSRAQSTYFNDPKWPSMWYMHCSDNTHPCQSDMNIEGAWKRGYTGKNIVVTILDDGIERTHPDLMQNYDALASCDVNGNDLDPMPRYDASNENKHGTRCAGEVAATANNSHCTVGIAFNAKIGGVRMLDGDVTDMVEAKSVSYNPQHVHIYSASWGPDDDGKTVDGPAPLTRQAFENGVRMGRRGLGSVFVWASGNGGRSKDHCSCDGYTNSIYTISISSTAESGKKPWYLEECSSTLATTYSSGESYDKKIITTDLRQRCTDNHTGTSASAPMAAGIIALALEANPFLTWRDVQHVIVRTSRAGHLNANDWKTNAAGFKVSHLYGFGLMDAEAMVMEAEKWTTVPQQHVCVESTDRQIKTIRPNSAVRSIYKASGCSDNPNHHVNYLEHVVVRITITHPRRGDLAIYLTSPSGTRSQLLANRLFDHSMEGFKNWEFMTIHCWGERAAGDWVLEVYDTPSQLRNFKTPGKLKEWSLVLYGTSVQPYSPTNEFPKVERFRYSRVEDPTDDYGAEDYAGPCDPECSEVGCDGPGPDHCTDCLHYHYKLKNNTRICVSSCPPGHFHADKKRCRKCAPNCESCFGSHADQCLSCKYGYFLNEETSSCVAQCPEGSYQDIKKNICGKCSENCKTCTGFHNCTECKGGLSLQGSRCSVTCEDGQFFSGHDCQPCHRFCATCAGAGADGCINCTEGYVMEEGRCVQSCSVSYYLDHSLEGGYKSCKRCDNSCLTCNGPGFKNCSSCPSGYLLDLGMCQMGAICKDGEYIDEQGHCQICDASCAKCWGPTQDDCISCPITRVFDDGRCVMNCPSWKFELKKQCHPCHHTCQGCQGSGPSNCTSCKAGEFQDSEYGECMPCEEGCVGCTVDDPGACTSCATGYYMFERHCYKACPEKTFGEKWECKACGTNCGSCDQHECYWCEEGFFLSSGSCVQDCDPGFYGDQELGECKPCHRACETCTGLGYNQCSSCPEGLQLWHGTCIWPTWPHVEGKVWNEAVPTEKPSLVRSLPQDRRKWKVQIKRDATRQYQPCHSSCKTCNGSLCTSCPAGTYLWLQACVPSCPQGTWLSVRSSSCEKCAEGCASCSGDDLCQRCLSQPSNTLLLHEGRCYHSCPEGFYAKDGVCEHCSSPCKTCKGNATSCHSCEGDFVLDHGVCWETCPEKHVAVEGVCKHCPERCQDCIHEKTCKECMPDFFLYNDMCHHSCPKNFYPDMRQCVPCHKNCLGCNGPKEDDCKACADTSKVLHNGLCLDECPKGTYKDEVNDECRDCPESCLICSSAWTCLTCREGFTVVQDVCTAPKECAAIEYWDVGSHRCQPCHRKCSRCSGPSENQCYTCPRETFLLNTTCVKECPEGYHTDKDSHQCVPCHSSCRTCEGPHSMQCLSCRPGWFQLGKECLLQCRDGYYGESTSGRCEKCDKSCKTCRGPQPTDCQSCDTFFFLLRSKGQCHLACPEHYYADQHAQTCERCHPTCDKCSGKEAWNCLSCVWSYHLLKGICTPECIVGEYRDGKGENFNCKKCHESCMECKGPGSKNCTGCSAGLLLQMDDSRCLRCCNASHPHRSQDCCDCQSSTDECILPASDDTVFHEHTKTALLVTSGAMLLLLLGAAVVVWRKSRSQPVAKGRYEKLAEPTVSYSSYRSSYLDEDQVIEYRDRDYDEDDEDDIVYMGQDGTVYRKFKYGLLDEAEDDELEYDDESYSYQ.

Residues 1–34 (MDWGWGSRCCRPGRRDLLCVLALLAGCLLPVCRT) form the signal peptide. Positions 35–116 (RVYTNHWAVK…QQVVKKRTKR (82 aa)) are excised as a propeptide. Over 117 to 1700 (DYDLSRAQST…DTVFHEHTKT (1584 aa)) the chain is Extracellular. The Peptidase S8 domain maps to 136–455 (MWYMHCSDNT…FGLMDAEAMV (320 aa)). Residues aspartate 173 and histidine 214 each act as charge relay system in the active site. Asparagine 227 and asparagine 383 each carry an N-linked (GlcNAc...) asparagine glycan. Catalysis depends on serine 388, which acts as the Charge relay system. The P/Homo B domain maps to 463–603 (TVPQQHVCVE…SLVLYGTSVQ (141 aa)). The short motif at 521 to 523 (RGD) is the Cell attachment site element. FU repeat units lie at residues 632-682 (EDYA…GHFH), 685-732 (KKRC…GSYQ), 736-779 (KNIC…GQFF), 781-826 (GHDC…SYYL), 834-881 (YKSC…GEYI), 884-929 (QGHC…WKFE), 931-964 (KKQC…QDSE), 965-1010 (YGEC…KTFG), 1012-1054 (KWEC…GFYG), 1058-1099 (LGEC…PTWP), 1137-1179 (TRQY…GTWL), 1183-1230 (SSSC…GFYA), 1232-1276 (DGVC…KHVA), 1278-1321 (EGVC…NFYP), 1323-1369 (MRQC…GTYK), 1373-1418 (NDEC…IEYW), 1422-1467 (SHRC…GYHT), 1471-1516 (SHQC…GYYG), 1520-1567 (SGRC…HYYA), 1571-1616 (AQTC…GEYR), and 1622-1669 (NFNC…SHPH). A CRM (Cys-rich motif) region spans residues 638 to 1685 (CDPECSEVGC…DCQSSTDECI (1048 aa)). A glycan (N-linked (GlcNAc...) asparagine) is linked at asparagine 667. N-linked (GlcNAc...) asparagine glycosylation is found at asparagine 754, asparagine 804, and asparagine 854. 2 N-linked (GlcNAc...) asparagine glycosylation sites follow: asparagine 1642 and asparagine 1664. The chain crosses the membrane as a helical span at residues 1701–1721 (ALLVTSGAMLLLLLGAAVVVW). Over 1722-1809 (RKSRSQPVAK…EYDDESYSYQ (88 aa)) the chain is Cytoplasmic. AC stretches follow at residues 1757–1776 (VIEY…IVYM) and 1788–1809 (YGLL…YSYQ).

Belongs to the peptidase S8 family. Expressed in the intestine, brain, adrenal gland, anterior pituitary, thyroid, ovaries, testis and lung. Highest levels are found in the gut, duodenum, jejunum and ileum. Expression is higher in female than in male reproductive organs.

It is found in the secreted. The protein resides in the endomembrane system. In terms of biological role, serine endoprotease that processes various proproteins by cleavage at paired basic amino acids, recognizing the RXXX[KR]R consensus motif. Likely functions in the constitutive and regulated secretory pathways. Plays an essential role in pregnancy establishment by proteolytic activation of a number of important factors such as BMP2, CALD1 and alpha-integrins. May be responsible for the maturation of gastrointestinal peptides. May be involved in the cellular proliferation of adrenal cortex via the activation of growth factors. The polypeptide is Proprotein convertase subtilisin/kexin type 5 (Pcsk5) (Rattus norvegicus (Rat)).